Here is a 428-residue protein sequence, read N- to C-terminus: Trigger factor (428 aa).

One can recognise a PPIase FKBP-type domain in the interval Gly163 to Pro248.

It belongs to the FKBP-type PPIase family. Tig subfamily.

It is found in the cytoplasm. The catalysed reaction is [protein]-peptidylproline (omega=180) = [protein]-peptidylproline (omega=0). Functionally, involved in protein export. Acts as a chaperone by maintaining the newly synthesized protein in an open conformation. Functions as a peptidyl-prolyl cis-trans isomerase. The chain is Trigger factor from Ruminiclostridium cellulolyticum (strain ATCC 35319 / DSM 5812 / JCM 6584 / H10) (Clostridium cellulolyticum).